We begin with the raw amino-acid sequence, 39 residues long: uncharacterized protein (39 aa).

The protein belongs to the orthopoxvirus A30.5 protein family.

This is an uncharacterized protein from Bos taurus (Bovine).